The chain runs to 245 residues: 5-oxoprolinase subunit A (245 aa).

This sequence belongs to the LamB/PxpA family. Forms a complex composed of PxpA, PxpB and PxpC.

The catalysed reaction is 5-oxo-L-proline + ATP + 2 H2O = L-glutamate + ADP + phosphate + H(+). In terms of biological role, catalyzes the cleavage of 5-oxoproline to form L-glutamate coupled to the hydrolysis of ATP to ADP and inorganic phosphate. This is 5-oxoprolinase subunit A from Chromobacterium violaceum (strain ATCC 12472 / DSM 30191 / JCM 1249 / CCUG 213 / NBRC 12614 / NCIMB 9131 / NCTC 9757 / MK).